Reading from the N-terminus, the 200-residue chain is GTP cyclohydrolase-2 (200 aa).

49–53 provides a ligand contact to GTP; the sequence is RVHSE. Zn(2+)-binding residues include Cys54, Cys65, and Cys67. Residues Gln70, 92-94, and Thr114 contribute to the GTP site; that span reads EGR. Asp126 acts as the Proton acceptor in catalysis. Arg128 acts as the Nucleophile in catalysis. GTP contacts are provided by Thr149 and Lys154.

It belongs to the GTP cyclohydrolase II family. Homodimer. Zn(2+) is required as a cofactor.

It carries out the reaction GTP + 4 H2O = 2,5-diamino-6-hydroxy-4-(5-phosphoribosylamino)-pyrimidine + formate + 2 phosphate + 3 H(+). It participates in cofactor biosynthesis; riboflavin biosynthesis; 5-amino-6-(D-ribitylamino)uracil from GTP: step 1/4. Catalyzes the conversion of GTP to 2,5-diamino-6-ribosylamino-4(3H)-pyrimidinone 5'-phosphate (DARP), formate and pyrophosphate. In Klebsiella pneumoniae (strain 342), this protein is GTP cyclohydrolase-2.